A 312-amino-acid chain; its full sequence is Malate dehydrogenase (312 aa).

Residues 12–17 (GAGFTG) and aspartate 36 contribute to the NAD(+) site. Substrate is bound by residues arginine 87 and arginine 93. NAD(+) is bound by residues asparagine 100 and 123-125 (LTN). Asparagine 125 contacts substrate. Serine 149 carries the post-translational modification Phosphoserine. Position 156 (arginine 156) interacts with substrate. Histidine 180 (proton acceptor) is an active-site residue.

It belongs to the LDH/MDH superfamily. MDH type 3 family.

It catalyses the reaction (S)-malate + NAD(+) = oxaloacetate + NADH + H(+). In terms of biological role, catalyzes the reversible oxidation of malate to oxaloacetate. In Bacillus pumilus (strain SAFR-032), this protein is Malate dehydrogenase.